The primary structure comprises 494 residues: Alpha-amylase-related protein (494 aa).

Positions 1-20 (MIKFALALTLCLAGASLSLA) are cleaved as a signal peptide. Gln-21 is subject to Pyrrolidone carboxylic acid. Cys-48 and Cys-104 are joined by a disulfide. Asn-118, Gln-169, and Asp-178 together coordinate Ca(2+). Cys-157 and Cys-171 form a disulfide bridge. Chloride is bound at residue Arg-206. Residue Asp-208 is the Nucleophile of the active site. A Ca(2+)-binding site is contributed by His-212. The Proton donor role is filled by Glu-245. Residues Asn-308 and Arg-343 each contribute to the chloride site. 3 disulfide bridges follow: Cys-376–Cys-382, Cys-418–Cys-441, and Cys-448–Cys-460.

The protein belongs to the glycosyl hydrolase 13 family. In terms of assembly, monomer. It depends on Ca(2+) as a cofactor. Chloride is required as a cofactor.

The protein localises to the secreted. The enzyme catalyses Endohydrolysis of (1-&gt;4)-alpha-D-glucosidic linkages in polysaccharides containing three or more (1-&gt;4)-alpha-linked D-glucose units.. The protein is Alpha-amylase-related protein (Amyrel) of Drosophila kikkawai (Fruit fly).